A 243-amino-acid polypeptide reads, in one-letter code: Adenylate dimethylallyltransferase (243 aa).

Belongs to the isopentenyl transferase family.

The enzyme catalyses dimethylallyl diphosphate + AMP = N(6)-(dimethylallyl)adenosine 5'-phosphate + diphosphate. Functionally, transfers dimethylallyl groups to AMP as part of the biosynthesis of cytokinin phytohormones. The chain is Adenylate dimethylallyltransferase (tzs) from Rhizobium rhizogenes (Agrobacterium rhizogenes).